Consider the following 241-residue polypeptide: MIINAKGPASFAEKYIVRSIWENKFPPGSILPAERELSELIGVTRTTLREVLQRLARDGWLKIQHGKPTRVNNFWETSGLNILETIADLNPEGFPVLVDQLLSARTNVSAIYFRGALRNSPDTAVEVLGQIHQLEDTAESFAEYDYLLHHTLAFSSGNPLYVLILNGFKGLYSRVGRYYFSSPEARQLALNFYKELEILAKAKNYIDVPALMRTYGINSGKMWLQLRDDMPSSIAQQDGNA.

Residues 6–74 (KGPASFAEKY…HGKPTRVNNF (69 aa)) form the HTH gntR-type domain. The H-T-H motif DNA-binding region spans 34-53 (ERELSELIGVTRTTLREVLQ).

In terms of assembly, homodimer.

The protein resides in the cytoplasm. Functionally, multifunctional regulator of fatty acid metabolism. In Shewanella sp. (strain ANA-3), this protein is Fatty acid metabolism regulator protein.